The following is a 619-amino-acid chain: Mitogen-activated protein kinase kinase kinase 2 (619 aa).

Disordered regions lie at residues 25–44, 126–168, 201–245, and 289–355; these read LSLQ…QNDV, QATN…PPPG, LDPL…DNHQ, and RTQG…APTN. S26 carries the post-translational modification Phosphoserine. Residues 43-122 form the PB1 domain; it reads DVRVKFEHRG…KSLKILLVVN (80 aa). The segment covering 126–143 has biased composition (polar residues); sequence QATNLEPSPSPEDLNNTP. Phosphoserine occurs at positions 153 and 164. Over residues 203–219 the composition is skewed to low complexity; sequence PLSLSSPENSGSGSCPS. Phosphoserine is present on residues S239, S297, S311, S331, S344, and S349. Over residues 290 to 299 the composition is skewed to polar residues; sequence TQGTSFRSPV. Over residues 300–315 the composition is skewed to low complexity; sequence SFSPTDHSLSTSSGSS. Over residues 322 to 332 the composition is skewed to basic and acidic residues; that stretch reads DDSRIRRRGSD. Residues 336 to 346 are compositionally biased toward polar residues; it reads PTLTVTDISPP. Residues 356 to 616 form the Protein kinase domain; that stretch reads WRLGKLLGQG…AEELLRHMFV (261 aa). ATP is bound by residues 362-370 and K385; that span reads LGQGAFGRV. D483 (proton acceptor) is an active-site residue.

Belongs to the protein kinase superfamily. STE Ser/Thr protein kinase family. MAP kinase kinase kinase subfamily. In terms of assembly, self-associates. Binds both upstream activators and downstream substrates in multimolecular complexes. Interacts (via the kinase catalytic domain) with STK38. Interacts with XIAP/BIRC4. Mg(2+) serves as cofactor. Post-translationally, ubiquitination by XIAP/BIRC4 does not lead to proteasomal degradation. In terms of processing, autophosphorylated.

It localises to the cytoplasm. Its subcellular location is the nucleus. The catalysed reaction is L-seryl-[protein] + ATP = O-phospho-L-seryl-[protein] + ADP + H(+). The enzyme catalyses L-threonyl-[protein] + ATP = O-phospho-L-threonyl-[protein] + ADP + H(+). Activated by phosphorylation on Thr-524. Interacts with PKN2; the interaction activates PKN2 kinase activity in a MAP3K2-independent kinase activity. In terms of biological role, component of a protein kinase signal transduction cascade. Regulates the JNK and ERK5 pathways by phosphorylating and activating MAP2K5 and MAP2K7. Plays a role in caveolae kiss-and-run dynamics. This chain is Mitogen-activated protein kinase kinase kinase 2 (Map3k2), found in Mus musculus (Mouse).